We begin with the raw amino-acid sequence, 304 residues long: Acetyl-coenzyme A carboxylase carboxyl transferase subunit beta (304 aa).

One can recognise a CoA carboxyltransferase N-terminal domain in the interval 25–294 (LWIKCPETGE…EAARRESGSQ (270 aa)).

This sequence belongs to the AccD/PCCB family. As to quaternary structure, acetyl-CoA carboxylase is a heterohexamer composed of biotin carboxyl carrier protein (AccB), biotin carboxylase (AccC) and two subunits each of ACCase subunit alpha (AccA) and ACCase subunit beta (AccD).

It localises to the cytoplasm. The catalysed reaction is N(6)-carboxybiotinyl-L-lysyl-[protein] + acetyl-CoA = N(6)-biotinyl-L-lysyl-[protein] + malonyl-CoA. It participates in lipid metabolism; malonyl-CoA biosynthesis; malonyl-CoA from acetyl-CoA: step 1/1. Its function is as follows. Component of the acetyl coenzyme A carboxylase (ACC) complex. Biotin carboxylase (BC) catalyzes the carboxylation of biotin on its carrier protein (BCCP) and then the CO(2) group is transferred by the transcarboxylase to acetyl-CoA to form malonyl-CoA. This chain is Acetyl-coenzyme A carboxylase carboxyl transferase subunit beta, found in Sinorhizobium fredii (strain NBRC 101917 / NGR234).